The chain runs to 874 residues: Endothelial PAS domain-containing protein 1 (874 aa).

Positions 1-23 are disordered; sequence MTADKEKKRSSSELRKEKSRDAA. Positions 14–67 constitute a bHLH domain; sequence LRKEKSRDAARCRRSKETEVFYELAHELPLPHSVSSHLDKASIMRLAISFLRTH. Residues 26 to 53 are DNA-binding; it reads RRSKETEVFYELAHELPLPHSVSSHLDK. The PAS 1 domain maps to 84–154; sequence DQQMDNLYLK…ENLTLKNGSG (71 aa). The segment at 171–192 is required for heterodimer formation with ARNT; that stretch reads RMKCTVTNRGRTVNLKSATWKV. One can recognise a PAS 2 domain in the interval 230–300; the sequence is QHPSHMDIPL…KSHQNLCTKG (71 aa). The 44-residue stretch at 304 to 347 folds into the PAC domain; that stretch reads SGQYRMLAKHGGYVWLETQGTVIYNPRNLQPQCIMCVNYVLSEI. P405 is modified (4-hydroxyproline). Positions 438–489 are disordered; sequence WVSGLRSHSAQSESGSLPAFTVPQADTPGNTTPSASSSSSCSTPSSPEDYYS. Positions 443–452 are enriched in polar residues; it reads RSHSAQSESG. The span at 464-484 shows a compositional bias: low complexity; sequence TPGNTTPSASSSSSCSTPSSP. Positions 495-541 are NTAD; that stretch reads LKIEVIEKLFAMDTEPRDPGSTQTDFSELDLETLAPYIPMDGEDFQL. P530 is modified (4-hydroxyproline). Positions 777–803 are disordered; it reads LGQPLRHLPPPQPPSTRSSGENAKTGF. The tract at residues 834 to 874 is CTAD; that stretch reads SFEPYLLPELTRYDCEVNVPVPGSSTLLQGRDLLRALDQAT. Phosphothreonine is present on T844. (3S)-3-hydroxyasparagine is present on N851.

In terms of assembly, interacts with HIF3A isoform 2. Efficient DNA binding requires dimerization with another bHLH protein. Heterodimerizes with ARNT; heterodimer binds to core DNA sequence 5'-TACGTG-3' within the hypoxia response element (HRE) of target gene promoters. Interacts with CREBBP. Interacts with EGLN1. Interacts with VHL. Post-translationally, in normoxia, is probably hydroxylated on Pro-405 and Pro-530 by EGLN1/PHD1, EGLN2/PHD2 and/or EGLN3/PHD3. The hydroxylated prolines promote interaction with VHL, initiating rapid ubiquitination and subsequent proteasomal degradation. Under hypoxia, proline hydroxylation is impaired and ubiquitination is attenuated, resulting in stabilization. In terms of processing, in normoxia, is hydroxylated on Asn-851 by HIF1AN thus probably abrogating interaction with CREBBP and EP300 and preventing transcriptional activation. Phosphorylated on multiple sites in the CTAD. Post-translationally, the iron and 2-oxoglutarate dependent 3-hydroxylation of asparagine is (S) stereospecific within HIF CTAD domains. Expressed in most tissues, with highest levels in lung, followed by heart, kidney, brain and liver. Predominantly expressed in endothelial cells. Also found in smooth muscle cells of the uterus, neurons, and brown adipose tissue. High expression in embryonic choroid plexus and kidney glomeruli.

It is found in the nucleus. It localises to the nucleus speckle. In terms of biological role, transcription factor involved in the induction of oxygen regulated genes. Heterodimerizes with ARNT; heterodimer binds to core DNA sequence 5'-TACGTG-3' within the hypoxia response element (HRE) of target gene promoters. Regulates the vascular endothelial growth factor (VEGF) expression and seems to be implicated in the development of blood vessels and the tubular system of lung. May also play a role in the formation of the endothelium that gives rise to the blood brain barrier. Potent activator of the Tie-2 tyrosine kinase expression. Activation requires recruitment of transcriptional coactivators such as CREBBP and probably EP300. Interaction with redox regulatory protein APEX seems to activate CTAD. This is Endothelial PAS domain-containing protein 1 (Epas1) from Mus musculus (Mouse).